A 562-amino-acid chain; its full sequence is NAD-dependent malic enzyme (562 aa).

Tyrosine 101 functions as the Proton donor in the catalytic mechanism. Arginine 154 provides a ligand contact to NAD(+). Lysine 172 (proton acceptor) is an active-site residue. The a divalent metal cation site is built by glutamate 243, aspartate 244, and aspartate 267. NAD(+) contacts are provided by aspartate 267 and asparagine 415.

The protein belongs to the malic enzymes family. As to quaternary structure, homotetramer. Mg(2+) serves as cofactor. Requires Mn(2+) as cofactor.

It carries out the reaction (S)-malate + NAD(+) = pyruvate + CO2 + NADH. The enzyme catalyses oxaloacetate + H(+) = pyruvate + CO2. This chain is NAD-dependent malic enzyme, found in Shewanella halifaxensis (strain HAW-EB4).